A 421-amino-acid chain; its full sequence is ATP-dependent RNA helicase RhlB (421 aa).

The Q motif signature appears at Gln9–Ala37. One can recognise a Helicase ATP-binding domain in the interval Leu40–Ile219. Ala53–Thr60 is an ATP binding site. Positions Asp165–Asp168 match the DEAD box motif. The Helicase C-terminal domain maps to Arg245 to Met390. Positions Asp392–Gly421 are disordered. The span at Pro402–Pro414 shows a compositional bias: low complexity.

It belongs to the DEAD box helicase family. RhlB subfamily. Component of the RNA degradosome, which is a multiprotein complex involved in RNA processing and mRNA degradation.

It is found in the cytoplasm. The enzyme catalyses ATP + H2O = ADP + phosphate + H(+). Its function is as follows. DEAD-box RNA helicase involved in RNA degradation. Has RNA-dependent ATPase activity and unwinds double-stranded RNA. This chain is ATP-dependent RNA helicase RhlB, found in Escherichia coli O157:H7.